The chain runs to 238 residues: RAD9, HUS1, RAD1-interacting nuclear orphan protein 1 (238 aa).

Residues 1 to 10 (MPPRKKRRQP) are compositionally biased toward basic residues. Residues 1–31 (MPPRKKRRQPSQKAPLLFHQQPLEGPKHSCA) are disordered. Phosphoserine; by PLK1 is present on Ser51. The short motif at 55-61 (SWVSPDF) is the RAD1-binding motif element. The segment at 74 to 105 (KHQNRARHSSRKPTTSKFPHLTFESPQSSSSE) is disordered. Residues 75-84 (HQNRARHSSR) are compositionally biased toward basic residues. The D-box motif lies at 125–132 (RRPLVPVL). Residues 174 to 178 (QKENS) carry the KEN box motif.

Interacts (when phosphorylated by PLK1) with POLQ; promoting POLQ recruitment to DNA damage sites. Interacts with RAD1; interaction is direct and promotes association with the 9-1-1 (RAD9-RAD1-HUS1) complex. Interacts with RAD18. Interacts with TOPBP1. Interacts with UBE2N. In terms of processing, phosphorylated at Ser-51 by PLK1, promoting interaction with polymerase theta (POLQ). Ubiquitinated and degraded by the APC/C complex upon mitotic exit. Weakly expressed in testis, prostate, ovary, thymus and small intestine. Expressed strongly in breast cancer cells.

It is found in the nucleus. The protein localises to the chromosome. Functionally, involved in microhomology-mediated end-joining (MMEJ) DNA repair by promoting recruitment of polymerase theta (POLQ) to DNA damage sites during mitosis. MMEJ is an alternative non-homologous end-joining (NHEJ) machinery that takes place during mitosis to repair double-strand breaks in DNA that originate in S-phase. Accumulates in M-phase; following phosphorylation by PLK1, interacts with POLQ, enabling its recruitment to double-strand breaks for subsequent repair. Also involved in the DNA damage response (DDR) signaling in response to genotoxic stresses such as ionizing radiation (IR) during the S phase. Recruited to sites of DNA damage through interaction with the 9-1-1 cell-cycle checkpoint response complex and TOPBP1 in a ATR-dependent manner. Required for the progression of the G1 to S phase transition. Plays a role in the stimulation of CHEK1 phosphorylation. The protein is RAD9, HUS1, RAD1-interacting nuclear orphan protein 1 of Homo sapiens (Human).